A 286-amino-acid chain; its full sequence is Inositol polyphosphate multikinase alpha (286 aa).

A disordered region spans residues 1-22; it reads MQLKVPEHQVAGHIAKDGKPGP.

It belongs to the inositol phosphokinase (IPK) family. In terms of processing, phosphorylated. In terms of tissue distribution, detected in leaves, stems, roots, siliques and flowers. Highly expressed in root tissues, anthers, the stigma, pollen grains and growing pollen tubes.

Its subcellular location is the nucleus. The protein resides in the cell membrane. It carries out the reaction 1D-myo-inositol 1,4,5-trisphosphate + 2 ATP = 1D-myo-inositol 1,3,4,5,6-pentakisphosphate + 2 ADP + 2 H(+). It catalyses the reaction 1D-myo-inositol 1,3,4,6-tetrakisphosphate + ATP = 1D-myo-inositol 1,3,4,5,6-pentakisphosphate + ADP + H(+). Its function is as follows. Inositol phosphate kinase with a broad substrate specificity. Phosphorylates inositol 1,4,5-trisphosphate (Ins(1,4,5)P3), inositol 1,4,5,6-tetrakisphosphate (Ins(1,4,5,6)P4), inositol 1,3,4,5-tetrakisphosphate (Ins(1,3,4,5)P4), inositol 1,3,4,6-tetrakisphosphate (Ins(1,3,4,6)P4) and inositol 1,2,3,4,6-pentakisphosphate (Ins(1,2,3,4,6)P5) but not inositol 1,4-bisphosphate (Ins(1,4)P2), inositol 1,3,4-trisphosphate (Ins(1,3,4)P3), inositol 1,2,6-trisphosphate (Ins(1,2,6)P3), inositol 3,4,5,6-tetrakisphosphate (Ins(3,4,5,6)P4), inositol 1,3,4,5,6-pentakisphosphate (Ins(1,3,4,5,6)P5), inositol 1,2,4,5,6-pentakisphosphate (Ins(1,2,4,5,6)P5) or inositol hexakisphosphate (InsP6). Regulates pollen and root development probably through the regulation of InsP3-mediated calcium accumulation. In Arabidopsis thaliana (Mouse-ear cress), this protein is Inositol polyphosphate multikinase alpha (IPK2a).